The following is a 598-amino-acid chain: (+)-bornyl diphosphate synthase, chloroplastic (598 aa).

The transit peptide at 1-54 directs the protein to the chloroplast; the sequence is MSIISMNVSILSKPLNCLHNLERRPSKALLVPCTAPTARLRASCSSKLQEAHQI. Arg314 is a substrate binding site. 2 residues coordinate Mg(2+): Asp351 and Asp355. Residues 351-355 carry the DDXXD motif motif; that stretch reads DDIYD. A substrate-binding site is contributed by Arg493. Residues Asp496, Thr500, and Glu504 each contribute to the Mg(2+) site. Position 500 (Thr500) interacts with substrate. Residue Lys512 coordinates substrate.

This sequence belongs to the terpene synthase family. In terms of assembly, homodimer. Mg(2+) is required as a cofactor.

The protein resides in the plastid. Its subcellular location is the chloroplast. It carries out the reaction (2E)-geranyl diphosphate = (2S,4R)-bornyl diphosphate. The enzyme catalyses (2E)-geranyl diphosphate = (1R,4S)-camphene + diphosphate. The catalysed reaction is (2E)-geranyl diphosphate = (1R,5R)-alpha-pinene + diphosphate. The protein operates within terpene metabolism; (R)-camphor biosynthesis. Catalyzes the formation of the (+)-camphor precursor (+)-bornyl diphosphate from geranyl diphosphate. The enzyme also produces significant amounts of (+)-alpha-pinene, (+)-camphene, and (+-)-limonene. This chain is (+)-bornyl diphosphate synthase, chloroplastic, found in Salvia officinalis (Sage).